Reading from the N-terminus, the 792-residue chain is Terminal nucleotidyltransferase 4A (792 aa).

The interval 55 to 191 (GAAGRGSGGL…QFHPGRRKRE (137 aa)) is disordered. Composition is skewed to low complexity over residues 80–97 (APAALPPALLTALGPAAE) and 105–139 (SPSLSSSSSSSSSNAESGTESPGCSSSSSSSASLG). Residues D297 and D299 each coordinate Mg(2+). ATP contacts are provided by G360, K385, S403, and Y404. A PAP-associated domain is found at 428-486 (NLGMLLVEFFELYGRNFNYLKTGIRIKEGGAYIAKEEIMKAMTSGYRPSMLCIEDPLLP). Residues N488 and R492 each coordinate ATP. The segment covering 601–619 (QLLSSGSSASSVSSLSGSD) has biased composition (low complexity). 2 disordered regions span residues 601–632 (QLLSSGSSASSVSSLSGSDVDSDTPPCTTPSV) and 737–792 (MKGS…SLSR). The segment covering 744–756 (TQGGGYSSVGSGG) has biased composition (gly residues). Residues 764-781 (RGHHQYNRTGWRRKKHTH) show a composition bias toward basic residues.

The protein belongs to the DNA polymerase type-B-like family. As to quaternary structure, component of a nuclear TRAMP-like complex, an ATP-dependent exosome regulatory complex consisting of a helicase (MTREX), an oligadenylate polymerase (TENT4B or TENT4A), and a substrate specific RNA-binding factor (ZCCHC7 or ZCCHC8). Several TRAMP-like complexes exist with specific compositions and are associated with nuclear, or nucleolar RNA exosomes. The cofactor is Mg(2+). It depends on Mn(2+) as a cofactor.

The protein localises to the cytoplasm. It localises to the nucleus. Its subcellular location is the nucleoplasm. It catalyses the reaction RNA(n) + ATP = RNA(n)-3'-adenine ribonucleotide + diphosphate. Functionally, terminal nucleotidyltransferase that catalyzes preferentially the transfer of ATP and GTP on RNA 3' poly(A) tail creating a heterogeneous 3' poly(A) tail leading to mRNAs stabilization by protecting mRNAs from active deadenylation. Also functions as a catalytic subunit of a TRAMP-like complex which has a poly(A) RNA polymerase activity and is involved in a post-transcriptional quality control mechanism. Polyadenylation with short oligo(A) tails is required for the degradative activity of the exosome on several of its nuclear RNA substrates. Has no terminal uridylyltransferase activity, and does not play a role in replication-dependent histone mRNA degradation via uridylation. This chain is Terminal nucleotidyltransferase 4A, found in Homo sapiens (Human).